A 150-amino-acid chain; its full sequence is UPF0178 protein Bpet3884 (150 aa).

Belongs to the UPF0178 family.

The chain is UPF0178 protein Bpet3884 from Bordetella petrii (strain ATCC BAA-461 / DSM 12804 / CCUG 43448).